The primary structure comprises 227 residues: Protein LppM (227 aa).

An N-terminal signal peptide occupies residues 1 to 24; the sequence is MARTRRRGMLAIAMLLMLVPLATG. Cysteine 25 is lipidated: N-palmitoyl cysteine. Cysteine 25 carries S-diacylglycerol cysteine lipidation. Positions 26–185 are important for bacterial uptake by host macrophages; that stretch reads LRVRASITIS…ARYTDPNTRS (160 aa). Residues 190-210 form a helical membrane-spanning segment; the sequence is GIWLGIAAFAAAGVVAVLAWI.

In terms of processing, a shorter form (about 20 kDa) is secreted; upon overexpression of the whole protein in M.smegmatis the C-terminus of the short form is about residue 187, suggesting it is generated by cleavage of the protein before its C-terminal transmembrane domain.

Its subcellular location is the membrane. It is found in the secreted. The protein resides in the cell wall. In terms of biological role, a putative lipoprotein that seems to be specialized for the initial steps of macrophage infection. A non-acylated fragment (residues 26-185) binds phosphatidyl-myo-inositol mannosides (PIMs). Limits, in a TLR2-dependent fashion, bacterial uptake by host (mouse); this effect may be mediated by nonacylated fragment 26-185. Plays a TLR2-dependent role in host phagosome maturation arrest. Plays a TLR2-independent role in chemokine production during the first 24 hours of mouse infection. This Mycobacterium tuberculosis (strain ATCC 25618 / H37Rv) protein is Protein LppM (lppM).